The chain runs to 390 residues: MAQKEGLPAGRLSAMVIDEDKCHADSTSYMLSAELNFSVTVFTSPIKALDFLQNHAEGVDLVLADVHMEEMNGFDFLKVARELHKSIQVIMMSTETTMYTMKRCVKLGAQFLVNKPLDAGTIKNLWQYVDLKVLRMEKIKDLLQGIGDESTCANETNSLAENPKNDTKKKYYLMWTPHLQKKFLHALQILGKDASPKNIKKIMGVDNIDCRQIAAHLQKHRLRLTKDLKKASFTTDTSKDESNSRIGPAESHHVCRNASTLQPRSNTQPTETTMQILSEDAEYDDVYAAMRRALQYGIVFDESKHSSDPSGDEDEQVVVGGDQDGCANEANDIDSSGDHHQVAAVVTKPCNANASQEIINKMTNSDGMQATKGSKAAVFRLVDYSESDSD.

Residues 13-130 (SAMVIDEDKC…TIKNLWQYVD (118 aa)) enclose the Response regulatory domain. Asp-65 is subject to 4-aspartylphosphate. Positions 169 to 226 (KKYYLMWTPHLQKKFLHALQILGKDASPKNIKKIMGVDNIDCRQIAAHLQKHRLRLTK) form a DNA-binding region, myb-like GARP. 2 disordered regions span residues 233 to 271 (FTTDTSKDESNSRIGPAESHHVCRNASTLQPRSNTQPTE) and 303 to 339 (SKHSSDPSGDEDEQVVVGGDQDGCANEANDIDSSGDH). The span at 257–271 (NASTLQPRSNTQPTE) shows a compositional bias: polar residues.

Belongs to the ARR family. Type-B subfamily. Post-translationally, two-component system major event consists of a His-to-Asp phosphorelay between a sensor histidine kinase (HK) and a response regulator (RR). In plants, the His-to-Asp phosphorelay involves an additional intermediate named Histidine-containing phosphotransfer protein (HPt). This multistep phosphorelay consists of a His-Asp-His-Asp sequential transfer of a phosphate group between first a His and an Asp of the HK protein, followed by the transfer to a conserved His of the HPt protein and finally the transfer to an Asp in the receiver domain of the RR protein.

It is found in the cytoplasm. The protein localises to the cytosol. It localises to the nucleus. Functionally, transcriptional activator that binds specific DNA sequence. Functions as a response regulator involved in His-to-Asp phosphorelay signal transduction system. Phosphorylation of the Asp residue in the receiver domain activates the ability of the protein to promote the transcription of target genes. May directly activate some type-A response regulators in response to cytokinins. Functions as a response regulator in response to cytokinins. The sequence is that of Two-component response regulator ORR29 from Oryza sativa subsp. japonica (Rice).